We begin with the raw amino-acid sequence, 29 residues long: Cyclotide mden-C (29 aa).

The segment at residues 1 to 29 (GKPICGETCFKGKCYTPGCTCSYPVCKKN) is a cross-link (cyclopeptide (Gly-Asn)). Intrachain disulfides connect C5–C19, C9–C21, and C14–C26.

The protein belongs to the cyclotide family. Post-translationally, this is a cyclic peptide.

Probably participates in a plant defense mechanism. This Melicytus dentatus (Tree violet) protein is Cyclotide mden-C.